A 552-amino-acid polypeptide reads, in one-letter code: Beta-hexosaminidase A (552 aa).

The N-terminal stretch at 1 to 15 (MRLIVLSLLFTSTLA) is a signal peptide. N-linked (GlcNAc...) asparagine glycosylation is present at Asn-44. Glu-322 acts as the Proton donor in catalysis. 3 N-linked (GlcNAc...) asparagine glycosylation sites follow: Asn-348, Asn-409, and Asn-457.

It belongs to the glycosyl hydrolase 20 family.

The protein localises to the lysosome. It carries out the reaction Hydrolysis of terminal non-reducing N-acetyl-D-hexosamine residues in N-acetyl-beta-D-hexosaminides.. Functionally, responsible for the degradation of GM2 gangliosides, and a variety of other molecules containing terminal N-acetyl hexosamines. Degrades chitotriose. The protein is Beta-hexosaminidase A of Caenorhabditis briggsae.